Consider the following 115-residue polypeptide: Toxin-like structure LSTX-D1 (115 aa).

The signal sequence occupies residues 1-22; it reads MKVLVLFSVLFLTLFSYSSTEA. A propeptide spanning residues 23–44 is cleaved from the precursor; it reads IDEFDSDAEEDMLSLMANEQVR. 4 disulfides stabilise this stretch: Cys48–Cys63, Cys55–Cys72, Cys62–Cys87, and Cys74–Cys85.

The protein belongs to the neurotoxin 19 (CSTX) family. 01 subfamily. In terms of tissue distribution, expressed by the venom gland.

The protein localises to the secreted. The polypeptide is Toxin-like structure LSTX-D1 (Lycosa singoriensis (Wolf spider)).